A 268-amino-acid polypeptide reads, in one-letter code: Protein DEEPER ROOTING 1 (268 aa).

Residues 11-21 (LNGKQGNKKPN) are compositionally biased toward low complexity. Positions 11 to 39 (LNGKQGNKKPNTVPITTHPAKQEPREEFS) are disordered. Positions 30 to 39 (AKQEPREEFS) are enriched in basic and acidic residues. Positions 44–50 (GLLAIGT) match the IGT motif motif. The interval 220–246 (SRAASMKKYLEDRQIPTKKESNTEDDT) is disordered. The segment covering 227 to 246 (KYLEDRQIPTKKESNTEDDT) has biased composition (basic and acidic residues).

It belongs to the LAZY family. As to expression, expressed in roots.

Its function is as follows. Involved in the development of the root system architecture by influencing lateral root angles and primary root length. The sequence is that of Protein DEEPER ROOTING 1 from Prunus persica (Peach).